The chain runs to 565 residues: Formate--tetrahydrofolate ligase (565 aa).

Residue 67-74 coordinates ATP; the sequence is TPLGEGKT.

Belongs to the formate--tetrahydrofolate ligase family.

The catalysed reaction is (6S)-5,6,7,8-tetrahydrofolate + formate + ATP = (6R)-10-formyltetrahydrofolate + ADP + phosphate. It participates in one-carbon metabolism; tetrahydrofolate interconversion. The protein is Formate--tetrahydrofolate ligase of Saccharopolyspora erythraea (strain ATCC 11635 / DSM 40517 / JCM 4748 / NBRC 13426 / NCIMB 8594 / NRRL 2338).